A 288-amino-acid polypeptide reads, in one-letter code: Bifunctional protein FolD (288 aa).

NADP(+) is bound by residues 166–168 (GAS) and Ile-232.

It belongs to the tetrahydrofolate dehydrogenase/cyclohydrolase family. In terms of assembly, homodimer.

The enzyme catalyses (6R)-5,10-methylene-5,6,7,8-tetrahydrofolate + NADP(+) = (6R)-5,10-methenyltetrahydrofolate + NADPH. It catalyses the reaction (6R)-5,10-methenyltetrahydrofolate + H2O = (6R)-10-formyltetrahydrofolate + H(+). Its pathway is one-carbon metabolism; tetrahydrofolate interconversion. Functionally, catalyzes the oxidation of 5,10-methylenetetrahydrofolate to 5,10-methenyltetrahydrofolate and then the hydrolysis of 5,10-methenyltetrahydrofolate to 10-formyltetrahydrofolate. The sequence is that of Bifunctional protein FolD from Salmonella enteritidis PT4 (strain P125109).